A 302-amino-acid polypeptide reads, in one-letter code: tRNA pseudouridine synthase B (302 aa).

Catalysis depends on Asp-45, which acts as the Nucleophile.

The protein belongs to the pseudouridine synthase TruB family. Type 1 subfamily.

The enzyme catalyses uridine(55) in tRNA = pseudouridine(55) in tRNA. Responsible for synthesis of pseudouridine from uracil-55 in the psi GC loop of transfer RNAs. The polypeptide is tRNA pseudouridine synthase B (Francisella philomiragia subsp. philomiragia (strain ATCC 25017 / CCUG 19701 / FSC 153 / O#319-036)).